The following is a 283-amino-acid chain: Pantothenate synthetase (283 aa).

31 to 38 (MGALHDGH) contacts ATP. The Proton donor role is filled by H38. (R)-pantoate is bound at residue Q62. Residue Q62 participates in beta-alanine binding. 148–151 (GKKD) serves as a coordination point for ATP. A (R)-pantoate-binding site is contributed by Q154. ATP-binding positions include V177 and 185–188 (KSSR).

The protein belongs to the pantothenate synthetase family. In terms of assembly, homodimer.

It localises to the cytoplasm. It catalyses the reaction (R)-pantoate + beta-alanine + ATP = (R)-pantothenate + AMP + diphosphate + H(+). The protein operates within cofactor biosynthesis; (R)-pantothenate biosynthesis; (R)-pantothenate from (R)-pantoate and beta-alanine: step 1/1. In terms of biological role, catalyzes the condensation of pantoate with beta-alanine in an ATP-dependent reaction via a pantoyl-adenylate intermediate. The chain is Pantothenate synthetase from Staphylococcus aureus (strain MRSA252).